A 136-amino-acid chain; its full sequence is Small ribosomal subunit protein bS6 (136 aa).

Over residues 117–130 the composition is skewed to basic and acidic residues; it reads EERSRSSRRQREDV. The interval 117-136 is disordered; the sequence is EERSRSSRRQREDVIEGVEL.

Belongs to the bacterial ribosomal protein bS6 family.

In terms of biological role, binds together with bS18 to 16S ribosomal RNA. This is Small ribosomal subunit protein bS6 from Bartonella quintana (strain Toulouse) (Rochalimaea quintana).